Reading from the N-terminus, the 431-residue chain is Protein farnesyltransferase subunit beta (431 aa).

5 PFTB repeats span residues 130–171 (KRKI…SLCD), 182–224 (RKGI…TLLN), 231–273 (TEGV…AILR), 280–322 (VEKL…AILE), and 332–375 (KHAL…AVAE). (2E,6E)-farnesyl diphosphate contacts are provided by residues 258 to 261 (HGGY) and 301 to 304 (RSNK). Zn(2+)-binding residues include D307 and C309. 310–313 (YSFW) lines the (2E,6E)-farnesyl diphosphate pocket. Position 363 (H363) interacts with Zn(2+).

It belongs to the protein prenyltransferase subunit beta family. In terms of assembly, heterodimer of an alpha (RAM2) and a beta (RAM1) subunit. Requires Zn(2+) as cofactor.

The protein localises to the cytoplasm. The catalysed reaction is L-cysteinyl-[protein] + (2E,6E)-farnesyl diphosphate = S-(2E,6E)-farnesyl-L-cysteinyl-[protein] + diphosphate. Its function is as follows. Catalyzes the transfer of a farnesyl moiety from farnesyl diphosphate to a cysteine at the fourth position from the C-terminus of several proteins having the C-terminal sequence Cys-aliphatic-aliphatic-X where X is Ser, Ala, Met, Cys, or Gln. Required for the membrane localization of proteins such as a-factor, Ras proteins and other membrane proteins containing the C-terminal CAAX motif. The beta subunit is responsible for isoprenoid and peptide-binding. The chain is Protein farnesyltransferase subunit beta from Saccharomyces cerevisiae (strain ATCC 204508 / S288c) (Baker's yeast).